Consider the following 512-residue polypeptide: Phosphoenolpyruvate carboxylase (512 aa).

It belongs to the PEPCase type 2 family. As to quaternary structure, homotetramer. The cofactor is Mg(2+).

It carries out the reaction oxaloacetate + phosphate = phosphoenolpyruvate + hydrogencarbonate. In terms of biological role, catalyzes the irreversible beta-carboxylation of phosphoenolpyruvate (PEP) to form oxaloacetate (OAA), a four-carbon dicarboxylic acid source for the tricarboxylic acid cycle. This Caldivirga maquilingensis (strain ATCC 700844 / DSM 13496 / JCM 10307 / IC-167) protein is Phosphoenolpyruvate carboxylase.